We begin with the raw amino-acid sequence, 96 residues long: Aspartyl/glutamyl-tRNA(Asn/Gln) amidotransferase subunit C (96 aa).

Belongs to the GatC family. Heterotrimer of A, B and C subunits.

It catalyses the reaction L-glutamyl-tRNA(Gln) + L-glutamine + ATP + H2O = L-glutaminyl-tRNA(Gln) + L-glutamate + ADP + phosphate + H(+). The catalysed reaction is L-aspartyl-tRNA(Asn) + L-glutamine + ATP + H2O = L-asparaginyl-tRNA(Asn) + L-glutamate + ADP + phosphate + 2 H(+). Its function is as follows. Allows the formation of correctly charged Asn-tRNA(Asn) or Gln-tRNA(Gln) through the transamidation of misacylated Asp-tRNA(Asn) or Glu-tRNA(Gln) in organisms which lack either or both of asparaginyl-tRNA or glutaminyl-tRNA synthetases. The reaction takes place in the presence of glutamine and ATP through an activated phospho-Asp-tRNA(Asn) or phospho-Glu-tRNA(Gln). In Chloroflexus aurantiacus (strain ATCC 29366 / DSM 635 / J-10-fl), this protein is Aspartyl/glutamyl-tRNA(Asn/Gln) amidotransferase subunit C.